The following is a 699-amino-acid chain: Sarcoplasmic reticulum histidine-rich calcium-binding protein (699 aa).

The N-terminal stretch at 1–28 (MGHHRPWLHASVLWAGVASLLLPPAMTQ) is a signal peptide. The segment at 50 to 95 (SEEASAELRHHLHSPRDHPDENKDVSTENGHHFWSHPDREKEDEDV) is disordered. The segment covering 55 to 89 (AELRHHLHSPRDHPDENKDVSTENGHHFWSHPDRE) has biased composition (basic and acidic residues). The residue at position 76 (Thr76) is a Phosphothreonine; by FAM20C. 10 tandem repeats follow at residues 106 to 121 (HRSQDHKVGDEGVSGE), 134 to 154 (HRGHGSEDTEDSAEHRHHLPS), 155 to 177 (HRSHSHQDEDEDEVVSSEHHHHI), 180 to 213 (HGHRGHDGEDDEGEEEEEEEEEEEEASTEYGHQA), 214 to 237 (HRHRGHGSEEDEDVSDGHHHHGPS), 238 to 270 (HRHQGHEEDDDDDDDDDDDDDDDDVSIEYRHQA), 271 to 294 (HRHQGHGIEEDEDVSDGHHHRDPS), 295 to 318 (HRHRSHEEDDNDDDDVSTEYGHQA), 319 to 342 (HRHQDHRKEEVEAVSGEHHHHVPD), and 343 to 365 (HRHQGHRDEEEDEDVSTERWHQG). The interval 106-342 (HRSQDHKVGD…SGEHHHHVPD (237 aa)) is 6 X approximate tandem repeats. The tract at residues 106–365 (HRSQDHKVGD…DVSTERWHQG (260 aa)) is 4 X tandem repeats, acidic. Ser119 and Ser145 each carry phosphoserine; by FAM20C. The segment at 127-617 (HGGQARGHRG…EDTGPQDAQE (491 aa)) is disordered. Basic residues-rich tracts occupy residues 148-158 (HRHHLPSHRSH) and 173-183 (HHHHILRHGHR). Residues 187–206 (GEDDEGEEEEEEEEEEEEAS) are compositionally biased toward acidic residues. Basic residues predominate over residues 231–241 (HHHHGPSHRHQ). The segment covering 244–263 (EEDDDDDDDDDDDDDDDDVS) has biased composition (acidic residues). A compositionally biased stretch (basic residues) spans 288–298 (HHHRDPSHRHR). The span at 302-311 (EDDNDDDDVS) shows a compositional bias: acidic residues. Residues 324 to 335 (HRKEEVEAVSGE) are compositionally biased toward basic and acidic residues. Phosphoserine is present on Ser333. Residues 336–347 (HHHHVPDHRHQG) show a composition bias toward basic residues. 2 positions are modified to phosphoserine; by FAM20C: Ser358 and Ser431. Basic and acidic residues-rich tracts occupy residues 444-463 (SHQDEETGHGQRGSIKEMSH) and 470-481 (VVKDRSHLRKDD). Ser494 is modified (phosphoserine; by FAM20C). Basic and acidic residues predominate over residues 504–515 (QGEKGTHHGSRD). Acidic residues-rich tracts occupy residues 532-551 (QEEEEEEDKEEEEEEEDEER) and 567-581 (SEEEEEEEEGLEEDE). Residue Ser567 is modified to Phosphoserine; by FAM20C. The segment at 627–673 (CGYCSFCNRCTECESCHCDEENMGEHCDQCQHCQFCYLCPLVCETVC) is metal-binding.

Belongs to the HRC family.

It localises to the sarcoplasmic reticulum lumen. Functionally, may play a role in the regulation of calcium sequestration or release in the SR of skeletal and cardiac muscle. In Homo sapiens (Human), this protein is Sarcoplasmic reticulum histidine-rich calcium-binding protein (HRC).